The primary structure comprises 119 residues: Ribonuclease P protein component (119 aa).

Belongs to the RnpA family. Consists of a catalytic RNA component (M1 or rnpB) and a protein subunit.

The catalysed reaction is Endonucleolytic cleavage of RNA, removing 5'-extranucleotides from tRNA precursor.. Its function is as follows. RNaseP catalyzes the removal of the 5'-leader sequence from pre-tRNA to produce the mature 5'-terminus. It can also cleave other RNA substrates such as 4.5S RNA. The protein component plays an auxiliary but essential role in vivo by binding to the 5'-leader sequence and broadening the substrate specificity of the ribozyme. This chain is Ribonuclease P protein component, found in Pasteurella multocida (strain Pm70).